An 860-amino-acid polypeptide reads, in one-letter code: Transcription factor E2F8 (860 aa).

2 disordered regions span residues 1 to 27 (MENQ…PSSK) and 38 to 57 (DLGP…GEPW). 2 positions are modified to phosphoserine: S71 and S102. DNA-binding regions lie at residues 113-182 (RKEK…TWHG) and 261-347 (RKDK…KWTG). Disordered regions lie at residues 407–433 (RRKI…PPVP), 532–616 (LTPP…PKED), and 745–803 (QMSA…QPVP). Residues S412 and S416 each carry the phosphoserine modification. Polar residues-rich tracts occupy residues 412-429 (SAPS…SQNS) and 542-554 (VCPT…TGSK). Residues 555–565 (DPTDAPAEKTA) are compositionally biased toward basic and acidic residues.

The protein belongs to the E2F/DP family. As to quaternary structure, interacts with HIF1A. Homodimer and heterodimer: mainly forms homodimers and, to a lesser extent, heterodimers with E2F8. Dimerization is important for DNA-binding. Highly expressed in liver, skin, thymus and testis. Expressed in trophoblast giant cells throughout placenta development (at protein level).

The protein resides in the nucleus. Its function is as follows. Atypical E2F transcription factor that participates in various processes such as angiogenesis and polyploidization of specialized cells. Mainly acts as a transcription repressor that binds DNA independently of DP proteins and specifically recognizes the E2 recognition site 5'-TTTC[CG]CGC-3'. Directly represses transcription of classical E2F transcription factors such as E2F1: component of a feedback loop in S phase by repressing the expression of E2F1, thereby preventing p53/TP53-dependent apoptosis. Plays a key role in polyploidization of cells in placenta and liver by regulating the endocycle, probably by repressing genes promoting cytokinesis and antagonizing action of classical E2F proteins (E2F1, E2F2 and/or E2F3). Required for placental development by promoting polyploidization of trophoblast giant cells. Acts as a promoter of sprouting angiogenesis, possibly by acting as a transcription activator: associates with HIF1A, recognizes and binds the VEGFA promoter, which is different from canonical E2 recognition site, and activates expression of the VEGFA gene. The polypeptide is Transcription factor E2F8 (E2f8) (Mus musculus (Mouse)).